Here is a 46-residue protein sequence, read N- to C-terminus: Defensin-like protein 2 (46 aa).

Cystine bridges form between Cys-3–Cys-46, Cys-13–Cys-33, Cys-19–Cys-40, and Cys-23–Cys-42.

In terms of assembly, monomer. Present in seeds, cotyledons and leaves. Not found in roots or stems.

Has antibacterial activity against the Gram-positive bacterium S.aureus and the Gram-negative bacteria E.coli and P.syringae. Does not have antibacterial activity against the phytopathogenic bacteria R.solanacearum, Rhataybacter sp and Erwinia sp. Does not inhibit trypsin, chymotrypsin or alpha-amylases. The chain is Defensin-like protein 2 from Vigna unguiculata (Cowpea).